The primary structure comprises 174 residues: UPF0398 protein llmg_0513 (174 aa).

It belongs to the UPF0398 family.

This is UPF0398 protein llmg_0513 from Lactococcus lactis subsp. cremoris (strain MG1363).